Consider the following 130-residue polypeptide: Small ribosomal subunit protein uS11 (130 aa).

Belongs to the universal ribosomal protein uS11 family. Part of the 30S ribosomal subunit. Interacts with proteins S7 and S18. Binds to IF-3.

In terms of biological role, located on the platform of the 30S subunit, it bridges several disparate RNA helices of the 16S rRNA. Forms part of the Shine-Dalgarno cleft in the 70S ribosome. This is Small ribosomal subunit protein uS11 from Synechococcus sp. (strain WH7803).